The chain runs to 116 residues: Ribosome-binding factor A (116 aa).

The protein belongs to the RbfA family. Monomer. Binds 30S ribosomal subunits, but not 50S ribosomal subunits or 70S ribosomes.

The protein localises to the cytoplasm. One of several proteins that assist in the late maturation steps of the functional core of the 30S ribosomal subunit. Associates with free 30S ribosomal subunits (but not with 30S subunits that are part of 70S ribosomes or polysomes). Required for efficient processing of 16S rRNA. May interact with the 5'-terminal helix region of 16S rRNA. This is Ribosome-binding factor A from Ureaplasma parvum serovar 3 (strain ATCC 27815 / 27 / NCTC 11736).